Reading from the N-terminus, the 117-residue chain is MDTETSPLLSHNLSTREGIKQSTQGLLAHTIARYPGTTAILLGILILLVIILIIVAIVYYNRSVDCKSSMPKPPPSYYVQQPEPHHHFPVFFRKRKNSTSLQSHIPSDEQLAELAHS.

N12 carries N-linked (GlcNAc...) asparagine; by host glycosylation. The chain crosses the membrane as a helical span at residues 39–59 (AILLGILILLVIILIIVAIVY). 2 N-linked (GlcNAc...) asparagine; by host glycosylation sites follow: N61 and N97.

It belongs to the asfivirus minor capsid protein p17 family. As to quaternary structure, interacts with the minor capsid protein M1249L and with the hexon capsid protein p72 capsomers; these interactions form a rigid zipper structure that stabilizes the capsomers. Interacts with host STING1.

It is found in the virion membrane. Its subcellular location is the host endoplasmic reticulum membrane. It localises to the host Golgi apparatus membrane. Functionally, together with the penton and the other minor capsid proteins (M1249L, p49), forms a complicated network immediately below the outer capsid shell, stabilizing the whole capsid. Three copies of p17 encircle each p72 capsomer in the inner capsid shell, anchoring p72 capsomers on the inner membrane. Required for the assembly of the capsid and icosahedral morphogenesis. Additionally, inhibits the host cGAS-STING pathway through its interaction with STING1 and subsequent interference of the recruitment of downstream components TBK1 and IKBKE. This chain is Minor capsid protein p17, found in African swine fever virus (strain Badajoz 1971 Vero-adapted) (Ba71V).